The sequence spans 29 residues: U-homostoxin-Hdu1a (29 aa).

A glycan (O-linked (GlcNAc...) threonine) is linked at T1. Intrachain disulfides connect C7–C19 and C10–C25.

It belongs to the sea anemone BBH family.

Its subcellular location is the secreted. The protein localises to the nematocyst. This chain is U-homostoxin-Hdu1a, found in Homostichanthus duerdeni (Sea anemone).